The following is a 445-amino-acid chain: Phosphoglucosamine mutase (445 aa).

The Phosphoserine intermediate role is filled by serine 102. Mg(2+)-binding residues include serine 102, aspartate 241, aspartate 243, and aspartate 245. Serine 102 carries the phosphoserine modification.

Belongs to the phosphohexose mutase family. Requires Mg(2+) as cofactor. Activated by phosphorylation.

The enzyme catalyses alpha-D-glucosamine 1-phosphate = D-glucosamine 6-phosphate. Catalyzes the conversion of glucosamine-6-phosphate to glucosamine-1-phosphate. The sequence is that of Phosphoglucosamine mutase from Klebsiella pneumoniae (strain 342).